A 144-amino-acid chain; its full sequence is Acylphosphatase-like protein MJ1331 (144 aa).

Positions Thr-8 to Thr-100 constitute an Acylphosphatase-like domain.

This Methanocaldococcus jannaschii (strain ATCC 43067 / DSM 2661 / JAL-1 / JCM 10045 / NBRC 100440) (Methanococcus jannaschii) protein is Acylphosphatase-like protein MJ1331.